The primary structure comprises 100 residues: ESAT-6-like protein EsxB (100 aa).

The tract at residues 80 to 100 is disordered; sequence GTQYTSTDEDQAGTLASSMNI.

The protein belongs to the WXG100 family. CFP-10 subfamily. As to quaternary structure, forms a tight 1:1 complex with EsxA. An artificial EsxA-EsxB heterodimer interacts with EspA.

It is found in the secreted. In terms of biological role, an exported protein. Plays a role in DNA conjugation, in at least a donor strain. The polypeptide is ESAT-6-like protein EsxB (Mycolicibacterium smegmatis (strain ATCC 700084 / mc(2)155) (Mycobacterium smegmatis)).